The primary structure comprises 557 residues: uncharacterized protein (557 aa).

A signal peptide spans 1 to 30; the sequence is MAPRRRRHTRIAGLRVVGTATLVAATTLTA. A lipid anchor (N-palmitoyl cysteine) is attached at cysteine 31. Cysteine 31 carries the S-diacylglycerol cysteine lipid modification.

The protein to M.bovis Mb2616c and M.leprae ML0489.

Its subcellular location is the cell membrane. This is an uncharacterized protein from Mycobacterium tuberculosis (strain CDC 1551 / Oshkosh).